A 137-amino-acid chain; its full sequence is Small ribosomal subunit protein uS11 (137 aa).

The disordered stretch occupies residues 1 to 25 (MADRRRGAARGGAARPRRRERKNIP). Positions 15 to 25 (RPRRRERKNIP) are enriched in basic residues.

The protein belongs to the universal ribosomal protein uS11 family. As to quaternary structure, part of the 30S ribosomal subunit. Interacts with proteins S7 and S18. Binds to IF-3.

Functionally, located on the platform of the 30S subunit, it bridges several disparate RNA helices of the 16S rRNA. Forms part of the Shine-Dalgarno cleft in the 70S ribosome. The chain is Small ribosomal subunit protein uS11 from Thermomicrobium roseum (strain ATCC 27502 / DSM 5159 / P-2).